The following is a 181-amino-acid chain: Bifunctional protein PyrR (181 aa).

The short motif at 100–112 is the PRPP-binding element; the sequence is VVLVDDVIYTGRT.

Belongs to the purine/pyrimidine phosphoribosyltransferase family. PyrR subfamily. Homodimer and homohexamer; in equilibrium.

It catalyses the reaction UMP + diphosphate = 5-phospho-alpha-D-ribose 1-diphosphate + uracil. Functionally, regulates transcriptional attenuation of the pyrimidine nucleotide (pyr) operon by binding in a uridine-dependent manner to specific sites on pyr mRNA. This disrupts an antiterminator hairpin in the RNA and favors formation of a downstream transcription terminator, leading to a reduced expression of downstream genes. Also displays a weak uracil phosphoribosyltransferase activity which is not physiologically significant. The protein is Bifunctional protein PyrR of Pelotomaculum thermopropionicum (strain DSM 13744 / JCM 10971 / SI).